A 141-amino-acid polypeptide reads, in one-letter code: Nucleoside diphosphate kinase (141 aa).

The ATP site is built by Lys11, Phe59, Arg87, Thr93, Arg104, and Asn114. His117 serves as the catalytic Pros-phosphohistidine intermediate.

Belongs to the NDK family. As to quaternary structure, homotetramer. Requires Mg(2+) as cofactor.

It localises to the cytoplasm. The catalysed reaction is a 2'-deoxyribonucleoside 5'-diphosphate + ATP = a 2'-deoxyribonucleoside 5'-triphosphate + ADP. It carries out the reaction a ribonucleoside 5'-diphosphate + ATP = a ribonucleoside 5'-triphosphate + ADP. Major role in the synthesis of nucleoside triphosphates other than ATP. The ATP gamma phosphate is transferred to the NDP beta phosphate via a ping-pong mechanism, using a phosphorylated active-site intermediate. This chain is Nucleoside diphosphate kinase, found in Pseudomonas fluorescens (strain SBW25).